The chain runs to 410 residues: Magnesium transporter NIPA3 (410 aa).

Residues 1–67 (MGAQVRLPPG…ISANVENKYS (67 aa)) lie on the Extracellular side of the membrane. N-linked (GlcNAc...) asparagine glycosylation is found at Asn25, Asn35, and Asn50. The helical transmembrane segment at 68–88 (LYVGLVLAVSSSIFIGSSFIL) threads the bilayer. Topologically, residues 89 to 114 (KKKGLLQLASKGITRAGQGGHSYLKE) are cytoplasmic. A helical transmembrane segment spans residues 115 to 135 (WLWWVGLLSMGVGEAANFAAY). Position 136 (Ala136) is a topological domain, extracellular. The chain crosses the membrane as a helical span at residues 137-157 (FAPATLVTPLGALSVLISAIL). Over 158 to 165 (SSYFLNEH) the chain is Cytoplasmic. A helical membrane pass occupies residues 166–186 (LNIHGKIGCILSILGSTVMVI). Over 187–207 (HAPQEEEVTSLHEMEMKLRDP) the chain is Extracellular. The chain crosses the membrane as a helical span at residues 208-228 (GFISFAVIVTVISLVLILIVA). Topologically, residues 229–233 (PKKGQ) are cytoplasmic. Residues 234 to 254 (TNILVYISICSLIGAFSVSSV) traverse the membrane as a helical segment. The Extracellular portion of the chain corresponds to 255-273 (KGLGIAIKELIEWKPVYKH). A helical membrane pass occupies residues 274-294 (PLVFVLLAVLVLSVTTQINYL). The Cytoplasmic portion of the chain corresponds to 295–304 (NKALDTFNTS). A helical membrane pass occupies residues 305 to 325 (IVTPIYYVFFTSMVVTCSAIL). At 326-336 (FQEWYGMTAGD) the chain is on the extracellular side. Residues 337–357 (IIGTLSGFFTIIIGIFLLHAF) form a helical membrane-spanning segment. Topologically, residues 358–410 (KNTDITWSELTSTAKKEAVSLNVSENNYVLLENLECSAPGYNDDVTLFSRTDD) are cytoplasmic.

This sequence belongs to the NIPA family.

Its subcellular location is the golgi apparatus membrane. The catalysed reaction is Mg(2+)(in) = Mg(2+)(out). In terms of biological role, acts as a Mg(2+) transporter. Can also transport other divalent cations such as Fe(2+), Sr(2+), Ba(2+), Mn(2+), Cu(2+) and Co(2+) but to a much less extent than Mg(2+). The polypeptide is Magnesium transporter NIPA3 (NIPAL1) (Pongo abelii (Sumatran orangutan)).